The following is a 283-amino-acid chain: Putative ABC transporter ATP-binding protein MA_4342 (283 aa).

In terms of domain architecture, ABC transporter spans 3-238 (IILENVSFFY…KNVPLPPVTS (236 aa)). 40-47 (GEKGAGKS) is an ATP binding site.

The protein belongs to the ABC transporter superfamily.

The protein resides in the cell membrane. In terms of biological role, probably part of an ABC transporter complex. Responsible for energy coupling to the transport system. This chain is Putative ABC transporter ATP-binding protein MA_4342, found in Methanosarcina acetivorans (strain ATCC 35395 / DSM 2834 / JCM 12185 / C2A).